We begin with the raw amino-acid sequence, 81 residues long: Sulfur carrier protein TusA (81 aa).

C19 serves as the catalytic Cysteine persulfide intermediate.

It belongs to the sulfur carrier protein TusA family. As to quaternary structure, interacts with IscS.

The protein localises to the cytoplasm. It participates in tRNA modification. Functionally, sulfur carrier protein involved in sulfur trafficking in the cell. Part of a sulfur-relay system required for 2-thiolation during synthesis of 2-thiouridine of the modified wobble base 5-methylaminomethyl-2-thiouridine (mnm(5)s(2)U) in tRNA. Interacts with IscS and stimulates its cysteine desulfurase activity. Accepts an activated sulfur from IscS, which is then transferred to TusD, and thus determines the direction of sulfur flow from IscS to 2-thiouridine formation. Also appears to be involved in sulfur transfer for the biosynthesis of molybdopterin. The protein is Sulfur carrier protein TusA of Escherichia coli (strain SMS-3-5 / SECEC).